We begin with the raw amino-acid sequence, 283 residues long: Diaminopimelate epimerase (283 aa).

Positions 13, 45, and 65 each coordinate substrate. C74 serves as the catalytic Proton donor. Substrate is bound by residues 75-76 (GN), N156, N190, and 208-209 (ER). The Proton acceptor role is filled by C217. Residue 218–219 (GS) coordinates substrate.

Belongs to the diaminopimelate epimerase family. Homodimer.

Its subcellular location is the cytoplasm. It catalyses the reaction (2S,6S)-2,6-diaminopimelate = meso-2,6-diaminopimelate. Its pathway is amino-acid biosynthesis; L-lysine biosynthesis via DAP pathway; DL-2,6-diaminopimelate from LL-2,6-diaminopimelate: step 1/1. Its function is as follows. Catalyzes the stereoinversion of LL-2,6-diaminopimelate (L,L-DAP) to meso-diaminopimelate (meso-DAP), a precursor of L-lysine and an essential component of the bacterial peptidoglycan. This is Diaminopimelate epimerase from Bartonella quintana (strain Toulouse) (Rochalimaea quintana).